The primary structure comprises 395 residues: Phosphoglycerate kinase (395 aa).

Residues 20-22, Arg36, 59-62, Arg120, and Arg157 contribute to the substrate site; these read DFN and HLGR. ATP contacts are provided by residues Lys208, Gly296, Glu327, and 353-356; that span reads GGDT.

It belongs to the phosphoglycerate kinase family. As to quaternary structure, monomer.

The protein resides in the cytoplasm. It carries out the reaction (2R)-3-phosphoglycerate + ATP = (2R)-3-phospho-glyceroyl phosphate + ADP. Its pathway is carbohydrate degradation; glycolysis; pyruvate from D-glyceraldehyde 3-phosphate: step 2/5. This is Phosphoglycerate kinase from Tropheryma whipplei (strain Twist) (Whipple's bacillus).